The primary structure comprises 335 residues: Autophagy-related protein 21 (335 aa).

2 WD repeats span residues 165 to 205 (CHSS…LVTE) and 210 to 249 (YIPA…SDPN).

The protein belongs to the WD repeat PROPPIN family.

It is found in the cytoplasm. It localises to the golgi apparatus. Its subcellular location is the golgi stack membrane. The protein localises to the vacuole membrane. The protein resides in the preautophagosomal structure membrane. Required for cytoplasm to vacuole transport (Cvt) vesicles formation and autophagy. Has a role in sporulation. The polypeptide is Autophagy-related protein 21 (mug179) (Schizosaccharomyces pombe (strain 972 / ATCC 24843) (Fission yeast)).